A 525-amino-acid polypeptide reads, in one-letter code: Bifunctional pantoate ligase/cytidylate kinase (525 aa).

Positions 1–292 (MDNVPIIRTV…VGSARLIDNM (292 aa)) are pantoate--beta-alanine ligase. 44–51 (MGALHAGH) is a binding site for ATP. His-51 functions as the Proton donor in the catalytic mechanism. (R)-pantoate is bound at residue Gln-75. Gln-75 is a binding site for beta-alanine. Position 162 to 165 (162 to 165 (GQKD)) interacts with ATP. Residue Gln-168 participates in (R)-pantoate binding. ATP-binding positions include Ile-191 and 199 to 202 (LSSR). A cytidylate kinase region spans residues 293-525 (LLDARLPILA…LYQERFPDRA (233 aa)).

This sequence in the N-terminal section; belongs to the pantothenate synthetase family. In the C-terminal section; belongs to the cytidylate kinase family. Type 1 subfamily.

The protein localises to the cytoplasm. The catalysed reaction is (R)-pantoate + beta-alanine + ATP = (R)-pantothenate + AMP + diphosphate + H(+). It carries out the reaction CMP + ATP = CDP + ADP. It catalyses the reaction dCMP + ATP = dCDP + ADP. It participates in cofactor biosynthesis; (R)-pantothenate biosynthesis; (R)-pantothenate from (R)-pantoate and beta-alanine: step 1/1. Its function is as follows. Catalyzes the condensation of pantoate with beta-alanine in an ATP-dependent reaction via a pantoyl-adenylate intermediate. Catalyzes the transfer of a phosphate group from ATP to either CMP or dCMP to form CDP or dCDP and ADP, respectively. This Acaryochloris marina (strain MBIC 11017) protein is Bifunctional pantoate ligase/cytidylate kinase.